The following is a 175-amino-acid chain: ADP-ribosylation factor 6 (175 aa).

The N-myristoyl glycine moiety is linked to residue G2. K3 carries the N6-myristoyl lysine lipid modification. GTP is bound by residues 23–28, 41–44, 63–67, 122–125, and 155–156; these read AAGKTT, TIPT, DVGGQ, NKQD, and CA.

It belongs to the small GTPase superfamily. Arf family.

It is found in the cytoplasm. The protein localises to the cytosol. Its subcellular location is the cell membrane. It localises to the endosome membrane. The protein resides in the recycling endosome membrane. It is found in the cell projection. The protein localises to the filopodium membrane. Its subcellular location is the ruffle. It localises to the cleavage furrow. The protein resides in the midbody. It is found in the midbody ring. The protein localises to the golgi apparatus. It carries out the reaction GTP + H2O = GDP + phosphate + H(+). Functionally, GTP-binding protein involved in protein trafficking; regulates endocytic recycling and cytoskeleton remodeling. May modulate vesicle budding and uncoating within the Golgi apparatus. May contribute to the regulation of dendritic branching, filopodia extension and dendritic spine development. The chain is ADP-ribosylation factor 6 (arf6) from Xenopus laevis (African clawed frog).